We begin with the raw amino-acid sequence, 438 residues long: MSGIWHTDDVHLTSAGADFGNCIHAKPPVVVVPRTVADVQEALRYTAARNLSLAVRGSGHSTYGQCQADGGVVLDMKRFNTVHDVRSGQATIDAGVRWSDVVAATLSRQQTPPVLTDYLGTTVGGTLSVGGFGGSSHGFGLQTDNVDSLAVVTGSGDFRECSAVSNSELFDAVRGGLGQFGVIVNATIRLTAAHESVRQYKLQYSNLGVFLGDQLRAMSNRLFDHVQGRIRVDADGHLRYRLDLAKYFTPPRRPDDDALLSSLQYDSCAEYNSDVDYGDFINRMADQELDLRHTGEWFYPHPWASLLIPADKIEQFIETTSSSLTDDLGNSGLIMVYPIPTTPITAPFIPIPHCDTFFMLAVLRTASPGAEARMIASNRLLYEQARDVGGVAYAVNAVPMSPGDWCTHFGSRWQAIARAKRRFDPYRILAPGYRMSFD.

The FAD-binding PCMH-type domain occupies 23 to 193 (IHAKPPVVVV…VNATIRLTAA (171 aa)). Residues 55 to 59 (VRGSG), 60 to 61 (HS), Q65, D117, T122, 128 to 132 (SVGGF), I183, Y393, and 430 to 433 (APGY) contribute to the FAD site. Residue H60 is modified to Pros-8alpha-FAD histidine.

The protein belongs to the oxygen-dependent FAD-linked oxidoreductase family. FAD is required as a cofactor.

The FAS-operon encodes genes involved in cytokinin production and in host plant fasciation (leafy gall). This is an uncharacterized protein from Rhodococcoides fascians (Rhodococcus fascians).